A 166-amino-acid polypeptide reads, in one-letter code: Macrocypin-5a (166 aa).

The disordered stretch occupies residues 20 to 39 (NIPGGMYASSKDGKDEPVTA).

Belongs to the protease inhibitor I85 family.

In terms of biological role, inhibits papain and cysteine cathepsin endopeptidases, and also inhibits cathepsins B and H, which exhibit both exopeptidase and endopeptidase activities. The chain is Macrocypin-5a from Macrolepiota procera (Parasol mushroom).